The primary structure comprises 160 residues: Single-stranded DNA-binding protein 2 (160 aa).

In terms of domain architecture, SSB spans 2-104 (MNRVVLVGRL…VVAESVQFLE (103 aa)). Positions 107 to 160 (NNNVEGATSNNYQNKANYSNNNQTSSYRADTSQKSDSFASEGKPIDINEDDLPF) are disordered. Positions 115 to 129 (SNNYQNKANYSNNNQ) are enriched in low complexity. Residues 130–144 (TSSYRADTSQKSDSF) are compositionally biased toward polar residues. The short motif at 155–160 (EDDLPF) is the Important for interaction with partner proteins element.

Homotetramer.

In terms of biological role, plays an important role in DNA replication, recombination and repair. Binds to ssDNA and to an array of partner proteins to recruit them to their sites of action during DNA metabolism. This chain is Single-stranded DNA-binding protein 2 (ssb2), found in Listeria monocytogenes serovar 1/2a (strain ATCC BAA-679 / EGD-e).